Here is a 140-residue protein sequence, read N- to C-terminus: MKAFIVLVALAMAAPALGRTLDRCSLAREMSNLGVPRDQLARWACIAEHESSYRTGVVGPENYNGSNDYGIFQINNYYWCAPPSGRFSYNECGLSCNALLTDDITHSVRCAQKVLSQQGWSAWSTWHYCSGWLPSIDGCF.

An N-terminal signal peptide occupies residues 1–18; that stretch reads MKAFIVLVALAMAAPALG. Residues 19 to 140 enclose the C-type lysozyme domain; it reads RTLDRCSLAR…GWLPSIDGCF (122 aa). Intrachain disulfides connect Cys-24-Cys-139, Cys-45-Cys-129, Cys-80-Cys-96, and Cys-92-Cys-110. Residues Glu-50 and Asp-68 contribute to the active site.

It belongs to the glycosyl hydrolase 22 family. In terms of tissue distribution, found in the midgut.

The enzyme catalyses Hydrolysis of (1-&gt;4)-beta-linkages between N-acetylmuramic acid and N-acetyl-D-glucosamine residues in a peptidoglycan and between N-acetyl-D-glucosamine residues in chitodextrins.. In terms of biological role, unlikely to play an active role in the humoral immune defense. May have a function in the digestion of bacteria in the food. This Drosophila melanogaster (Fruit fly) protein is Lysozyme E (LysE).